The following is an 85-amino-acid chain: Large ribosomal subunit protein bL27 (85 aa).

Positions 1-25 are disordered; sequence MAHKKAGGSSRNGRDSHSKRLGVKH.

This sequence belongs to the bacterial ribosomal protein bL27 family.

The sequence is that of Large ribosomal subunit protein bL27 from Buchnera aphidicola subsp. Baizongia pistaciae (strain Bp).